A 322-amino-acid chain; its full sequence is Crystallin J1B (322 aa).

It belongs to the ADP-ribosylglycohydrolase family. J1 crystallin subfamily. In terms of tissue distribution, expressed in the rhopalia. Present in both the large and small eyes.

This chain is Crystallin J1B, found in Tripedalia cystophora (Jellyfish).